The primary structure comprises 565 residues: Proline--tRNA ligase (565 aa).

This sequence belongs to the class-II aminoacyl-tRNA synthetase family. ProS type 1 subfamily. In terms of assembly, homodimer.

It is found in the cytoplasm. It catalyses the reaction tRNA(Pro) + L-proline + ATP = L-prolyl-tRNA(Pro) + AMP + diphosphate. Catalyzes the attachment of proline to tRNA(Pro) in a two-step reaction: proline is first activated by ATP to form Pro-AMP and then transferred to the acceptor end of tRNA(Pro). As ProRS can inadvertently accommodate and process non-cognate amino acids such as alanine and cysteine, to avoid such errors it has two additional distinct editing activities against alanine. One activity is designated as 'pretransfer' editing and involves the tRNA(Pro)-independent hydrolysis of activated Ala-AMP. The other activity is designated 'posttransfer' editing and involves deacylation of mischarged Ala-tRNA(Pro). The misacylated Cys-tRNA(Pro) is not edited by ProRS. This Francisella tularensis subsp. holarctica (strain FTNF002-00 / FTA) protein is Proline--tRNA ligase.